A 317-amino-acid chain; its full sequence is Beta-ketoacyl-[acyl-carrier-protein] synthase III (317 aa).

Residues C112 and H244 contribute to the active site. Residues 245–249 (QANLR) are ACP-binding. The active site involves N274.

It belongs to the thiolase-like superfamily. FabH family. In terms of assembly, homodimer.

It is found in the cytoplasm. The catalysed reaction is malonyl-[ACP] + acetyl-CoA + H(+) = 3-oxobutanoyl-[ACP] + CO2 + CoA. It participates in lipid metabolism; fatty acid biosynthesis. In terms of biological role, catalyzes the condensation reaction of fatty acid synthesis by the addition to an acyl acceptor of two carbons from malonyl-ACP. Catalyzes the first condensation reaction which initiates fatty acid synthesis and may therefore play a role in governing the total rate of fatty acid production. Possesses both acetoacetyl-ACP synthase and acetyl transacylase activities. Its substrate specificity determines the biosynthesis of branched-chain and/or straight-chain of fatty acids. This is Beta-ketoacyl-[acyl-carrier-protein] synthase III from Escherichia coli O9:H4 (strain HS).